The following is a 446-amino-acid chain: MRFRIYKRKVLILTFVVAACGFVLWSSNGRQRKNEALAPPLLDAEPVRGAGARAGDHPAISVGIRRGSNDSAAPLVAAAPQPEVDNLTLRYRSLVYQLNFDQTLRNVDKVSSWVPRELVLVVQVHNRAEYLKLLLDSLRKAQGIDNVLVIFSHDFWSTEINQLIAGVDFCPVLQVFFPFSIQLYPNEFPGTDPRDCPRDLEKNAALKMGCINAEYPDSFGHYREAKFSQTKHHWWWKLHFVWERVKVLRDYAGLILFLEEDHYVAPDFYHVFKKMWNLKQQECPECDVLSLGTYTTVRSFRDVADKVDVKTWKSTEHNMGLALTRDAYQKLIECTDTFCTYDDYNWDWTLQYLTVSCLPKFWKVLVPQVPRIFHAGDCGMHHKKTCRPSTQSAQIESLLNSNKQYMFPETLTISEKLTAALSPPRKNGGWGDIRDHELCKSYRRLQ.

The Cytoplasmic portion of the chain corresponds to 1–9 (MRFRIYKRK). The helical; Signal-anchor for type II membrane protein transmembrane segment at 10–29 (VLILTFVVAACGFVLWSSNG) threads the bilayer. Residues 30-446 (RQRKNEALAP…ELCKSYRRLQ (417 aa)) are Lumenal-facing. N-linked (GlcNAc...) asparagine glycans are attached at residues Asn69 and Asn86. Substrate-binding positions include 123-127 (QVHNR) and Asp154. A disulfide bond links Cys196 and Cys210. 229-233 (QTKHH) is a binding site for substrate. Residue Asp261 participates in Mn(2+) binding. Cys283 and Cys286 form a disulfide bridge. Residue Arg298 participates in substrate binding. 3 disulfides stabilise this stretch: Cys334/Cys357, Cys339/Cys439, and Cys378/Cys386. His374 lines the Mn(2+) pocket.

It belongs to the glycosyltransferase 16 (GT16) protein family. In terms of assembly, homodimer. Requires Mn(2+) as cofactor.

The protein resides in the golgi apparatus membrane. It carries out the reaction an N(4)-{beta-D-GlcNAc-(1-&gt;2)-alpha-D-Man-(1-&gt;3)-[alpha-D-Man-(1-&gt;6)]-beta-D-Man-(1-&gt;4)-beta-D-GlcNAc-(1-&gt;4)-beta-D-GlcNAc}-L-asparaginyl-[protein] + UDP-N-acetyl-alpha-D-glucosamine = N(4)-{beta-D-GlcNAc-(1-&gt;2)-alpha-D-Man-(1-&gt;3)-[beta-D-GlcNAc-(1-&gt;2)-alpha-D-Man-(1-&gt;6)]-beta-D-Man-(1-&gt;4)-beta-D-GlcNAc-(1-&gt;4)-beta-D-GlcNAc}-L-asparaginyl-[protein] + UDP + H(+). It functions in the pathway protein modification; protein glycosylation. Its function is as follows. Plays an essential role in protein N-glycosylation. Catalyzes the transfer of N-acetylglucosamine (GlcNAc) onto the free terminal mannose moiety in the core structure of the nascent N-linked glycan chain, giving rise to the second branch in complex glycans. The chain is Alpha-1,6-mannosyl-glycoprotein 2-beta-N-acetylglucosaminyltransferase (MGAT2) from Sus scrofa (Pig).